Consider the following 258-residue polypeptide: Aspartate/glutamate leucyltransferase (258 aa).

The protein belongs to the R-transferase family. Bpt subfamily.

The protein resides in the cytoplasm. It carries out the reaction N-terminal L-glutamyl-[protein] + L-leucyl-tRNA(Leu) = N-terminal L-leucyl-L-glutamyl-[protein] + tRNA(Leu) + H(+). It catalyses the reaction N-terminal L-aspartyl-[protein] + L-leucyl-tRNA(Leu) = N-terminal L-leucyl-L-aspartyl-[protein] + tRNA(Leu) + H(+). Functionally, functions in the N-end rule pathway of protein degradation where it conjugates Leu from its aminoacyl-tRNA to the N-termini of proteins containing an N-terminal aspartate or glutamate. The protein is Aspartate/glutamate leucyltransferase of Rhodopseudomonas palustris (strain BisB18).